A 91-amino-acid polypeptide reads, in one-letter code: Small ribosomal subunit protein bS16 (91 aa).

Belongs to the bacterial ribosomal protein bS16 family. Part of the 30S ribosomal subunit.

In terms of biological role, binds to the lower part of the body of the 30S subunit, where it stabilizes two of its domains. This chain is Small ribosomal subunit protein bS16, found in Thermus thermophilus.